Consider the following 587-residue polypeptide: DELLA protein RGA (587 aa).

Residues 1-26 (MKRDHHQFQGRLSNHGTSSSSSSISK) are disordered. The DELLA motif motif lies at 44–48 (DELLA). An LEXLE motif motif is present at residues 66–70 (LEQLE). A VHYNP motif motif is present at residues 89 to 93 (VHYNP). The disordered stretch occupies residues 152–181 (IDSSSSSNNQNKRLKSCSSPDSMVTSTSTG). The segment covering 153 to 175 (DSSSSSNNQNKRLKSCSSPDSMV) has biased composition (polar residues). One can recognise a GRAS domain in the interval 212–581 (VDSQENGVRL…RPLITTSAWK (370 aa)). A leucine repeat I (LRI) region spans residues 219 to 273 (VRLVHALMACAEAIQQNNLTLAEALVKQIGCLAVSQAGAMRKVATYFAEALARRI). The VHIID stretch occupies residues 292-357 (QMHFYETCPY…GGPPTFRLTG (66 aa)). The short motif at 323-327 (VHVID) is the VHIID element. Residues 371 to 403 (EVGCKLAQLAEAIHVEFEYRGFVANSLADLDAS) form a leucine repeat II (LRII) region. A PFYRE region spans residues 415-502 (VAVNSVFELH…EVYLGKQICN (88 aa)). Positions 423 to 427 (LHKLL) match the LXXLL motif motif. Residues 505–581 (ACEGPDRVER…RPLITTSAWK (77 aa)) are SAW.

It belongs to the GRAS family. DELLA subfamily. Interacts directly with the GID2/SLY1 component of the SCF(GID2) complex. Interacts (via N-terminus) with GID1A, GID1B and GID1B (via N-terminus). Binds to bHLH transcription factors such as MYC2, PIF1, PIF4, PIF6 and SPT. Interacts with the BOI proteins BOI, BRG1, BRG2 and BRG3. Interacts with NFYC9. Interacts with TOPP4. Interacts with FLZ5. Binds to zinc finger proteins MGP/IDD3, IDD4, IDD5, BIB/IDD9 and JKD/IDD10 in the nucleus. Binds to and coactivates GAF1/IDD2 and ENY/IDD1. Binds to PDF2 and ATML1. Phosphorylated. Phosphorylation may increase the interaction with GID2. Post-translationally, gibberellin (GA) induces dephosphorylation of RGA by TOPP4 and subsequent degradation by the proteasomal pathway. In terms of processing, ubiquitinated. Upon GA application it is ubiquitinated by the SCF(GID2) complex, leading to its subsequent degradation. O-fucosylated by SPY. O-fucosylation enhances RGA activity by promoting RGA binding to key transcription factors in brassinosteroid and light signaling pathways. Ubiquitously expressed. Expressed in roots, rosette leaves, bolting and mature stems, young and mature siliques, flower buds and influorescences.

It is found in the nucleus. Probable transcriptional regulator that acts as a repressor of the gibberellin (GA) signaling pathway. Probably acts by participating in large multiprotein complexes that repress transcription of GA-inducible genes. Positively regulates XERICO expression in seeds. Upon GA application, it is degraded by the proteasome, allowing the GA signaling pathway. Compared to other DELLA proteins, it is the most sensitive to GA application. No effect of the BOI proteins on its stability. Its activity is probably regulated by other phytohormones such as auxin and ethylene, attenuation of auxin transport delaying its GA-induced degradation. Involved in the regulation of seed dormancy and germination, including glucose-induced delay of seed germination. This chain is DELLA protein RGA, found in Arabidopsis thaliana (Mouse-ear cress).